The primary structure comprises 416 residues: Serine/threonine-protein phosphatase PP2A-like PPG1 (416 aa).

Positions 62, 64, 90, and 122 each coordinate Mn(2+). Residue His-123 is the Proton donor of the active site. Positions 173 and 248 each coordinate Mn(2+). Residues 363–391 form a disordered region; the sequence is EDTLQGKSVNGINFDDELSTSDDTSGSGG.

Belongs to the PPP phosphatase family. PP-2A subfamily. Mn(2+) is required as a cofactor.

It catalyses the reaction O-phospho-L-seryl-[protein] + H2O = L-seryl-[protein] + phosphate. It carries out the reaction O-phospho-L-threonyl-[protein] + H2O = L-threonyl-[protein] + phosphate. With respect to regulation, inhibited by okadaic acid, a specific inhibitor of serine/threonine phosphatases of types 1, 2A and 2B. Its function is as follows. Serine/threonine-protein phosphatase that plays an important role in controlling colony morphology, filament extension and agar invasion. Down-regulates expression of NRG1 and affects the expression of multiple filament-specific transcripts in response to serum and 37 degrees Celsius. Plays a crucial role in virulence in a mouse model of systemic candidiasis. This chain is Serine/threonine-protein phosphatase PP2A-like PPG1, found in Candida albicans (strain SC5314 / ATCC MYA-2876) (Yeast).